The chain runs to 616 residues: Dihydroxy-acid dehydratase (616 aa).

D81 provides a ligand contact to Mg(2+). Position 122 (C122) interacts with [2Fe-2S] cluster. Mg(2+) is bound by residues D123 and K124. K124 carries the N6-carboxylysine modification. Residue C195 coordinates [2Fe-2S] cluster. E491 contributes to the Mg(2+) binding site. S517 (proton acceptor) is an active-site residue.

This sequence belongs to the IlvD/Edd family. Homodimer. [2Fe-2S] cluster serves as cofactor. Requires Mg(2+) as cofactor.

It catalyses the reaction (2R)-2,3-dihydroxy-3-methylbutanoate = 3-methyl-2-oxobutanoate + H2O. The enzyme catalyses (2R,3R)-2,3-dihydroxy-3-methylpentanoate = (S)-3-methyl-2-oxopentanoate + H2O. Its pathway is amino-acid biosynthesis; L-isoleucine biosynthesis; L-isoleucine from 2-oxobutanoate: step 3/4. The protein operates within amino-acid biosynthesis; L-valine biosynthesis; L-valine from pyruvate: step 3/4. In terms of biological role, functions in the biosynthesis of branched-chain amino acids. Catalyzes the dehydration of (2R,3R)-2,3-dihydroxy-3-methylpentanoate (2,3-dihydroxy-3-methylvalerate) into 2-oxo-3-methylpentanoate (2-oxo-3-methylvalerate) and of (2R)-2,3-dihydroxy-3-methylbutanoate (2,3-dihydroxyisovalerate) into 2-oxo-3-methylbutanoate (2-oxoisovalerate), the penultimate precursor to L-isoleucine and L-valine, respectively. In Escherichia coli (strain SMS-3-5 / SECEC), this protein is Dihydroxy-acid dehydratase.